The primary structure comprises 365 residues: MKKIFNFSAGPSMLPKQVLNQIQQELYDWNNLGISIMEISHRSLEFMELVHDTKRNLRNLLNIPNSYEILFCHGGARAQFSAIPMNFLRGSADNIDYINTGYWGYLAAIESKKYCHPNIINISSSKNELRYIKPMSEWNISKNSTYIHYCPNETVEGISIDDIPDCFEKKIVIADFSSTLLSRPVNVNNFGMIYAAAQKNMGISGLTVLIIRRSLINNISTVQKIPAILNYRILADSNSMFNTPVTVSWYIANLVFKWLQDQGGLDKIAEYNKKKSNLLYHAIDSNDFYYNNIHSLNRSRMNIPFFLKKEKLNSLFLSESTSFGLHGLKGHKVIGGMRASLYNAMTLEGVQKLVNFMNFFSKKYG.

Arginine 42 serves as a coordination point for L-glutamate. Pyridoxal 5'-phosphate contacts are provided by residues 76-77, tryptophan 103, threonine 154, aspartate 175, and glutamine 198; that span reads AR. At lysine 199 the chain carries N6-(pyridoxal phosphate)lysine. 242–243 serves as a coordination point for pyridoxal 5'-phosphate; sequence NT.

It belongs to the class-V pyridoxal-phosphate-dependent aminotransferase family. SerC subfamily. As to quaternary structure, homodimer. Pyridoxal 5'-phosphate is required as a cofactor.

It localises to the cytoplasm. The catalysed reaction is O-phospho-L-serine + 2-oxoglutarate = 3-phosphooxypyruvate + L-glutamate. It catalyses the reaction 4-(phosphooxy)-L-threonine + 2-oxoglutarate = (R)-3-hydroxy-2-oxo-4-phosphooxybutanoate + L-glutamate. The protein operates within amino-acid biosynthesis; L-serine biosynthesis; L-serine from 3-phospho-D-glycerate: step 2/3. It functions in the pathway cofactor biosynthesis; pyridoxine 5'-phosphate biosynthesis; pyridoxine 5'-phosphate from D-erythrose 4-phosphate: step 3/5. Catalyzes the reversible conversion of 3-phosphohydroxypyruvate to phosphoserine and of 3-hydroxy-2-oxo-4-phosphonooxybutanoate to phosphohydroxythreonine. This chain is Phosphoserine aminotransferase, found in Blochmanniella floridana.